Reading from the N-terminus, the 272-residue chain is 4-hydroxy-tetrahydrodipicolinate reductase (272 aa).

An NAD(+)-binding site is contributed by 10–15 (GAAGRM). Arginine 37 is an NADP(+) binding site. NAD(+)-binding positions include 100–102 (GTT) and 124–127 (SGNM). The active-site Proton donor/acceptor is histidine 157. Histidine 158 serves as a coordination point for (S)-2,3,4,5-tetrahydrodipicolinate. The active-site Proton donor is lysine 161. Residue 167–168 (GT) coordinates (S)-2,3,4,5-tetrahydrodipicolinate.

This sequence belongs to the DapB family.

It is found in the cytoplasm. The catalysed reaction is (S)-2,3,4,5-tetrahydrodipicolinate + NAD(+) + H2O = (2S,4S)-4-hydroxy-2,3,4,5-tetrahydrodipicolinate + NADH + H(+). The enzyme catalyses (S)-2,3,4,5-tetrahydrodipicolinate + NADP(+) + H2O = (2S,4S)-4-hydroxy-2,3,4,5-tetrahydrodipicolinate + NADPH + H(+). Its pathway is amino-acid biosynthesis; L-lysine biosynthesis via DAP pathway; (S)-tetrahydrodipicolinate from L-aspartate: step 4/4. Functionally, catalyzes the conversion of 4-hydroxy-tetrahydrodipicolinate (HTPA) to tetrahydrodipicolinate. The polypeptide is 4-hydroxy-tetrahydrodipicolinate reductase (Methylocella silvestris (strain DSM 15510 / CIP 108128 / LMG 27833 / NCIMB 13906 / BL2)).